We begin with the raw amino-acid sequence, 642 residues long: MATAMDWLPWSLLLFSLMCETSAFYVPGVAPINFHQNDPVEIKAVKLTSSRTQLPYEYYSLPFCQPSKITYKAENLGEVLRGDRIVNTPFQVLMNSEKKCEVLCSQSNKPVTLTVEQSRLVAERITEDYYVHLIADNLPVATRLELYSNRDSDDKKKEKDVQFEHGYRLGFTDVNKIYLHNHLSFILYYHREDMEEDQEHTYRVVRFEVIPQSIRLEDLKADEKSSCTLPEGTNSSPQEIDPTKENQLYFTYSVHWEESDIKWASRWDTYLTMSDVQIHWFSIINSVVVVFFLSGILSMIIIRTLRKDIANYNKEDDIEDTMEESGWKLVHGDVFRPPQYPMILSSLLGSGIQLFCMILIVIFVAMLGMLSPSSRGALMTTACFLFMFMGVFGGFSAGRLYRTLKGHRWKKGAFCTATLYPGVVFGICFVLNCFIWGKHSSGAVPFPTMVALLCMWFGISLPLVYLGYYFGFRKQPYDNPVRTNQIPRQIPEQRWYMNRFVGILMAGILPFGAMFIELFFIFSAIWENQFYYLFGFLFLVFIILVVSCSQISIVMVYFQLCAEDYRWWWRNFLVSGGSAFYVLVYAIFYFVNKLDIVEFIPSLLYFGYTALMVLSFWLLTGTIGFYAAYMFVRKIYAAVKID.

The N-terminal stretch at 1-23 (MATAMDWLPWSLLLFSLMCETSA) is a signal peptide. Residues 24–281 (FYVPGVAPIN…TMSDVQIHWF (258 aa)) lie on the Extracellular side of the membrane. The helical transmembrane segment at 282–302 (SIINSVVVVFFLSGILSMIII) threads the bilayer. Residues 303–346 (RTLRKDIANYNKEDDIEDTMEESGWKLVHGDVFRPPQYPMILSS) lie on the Cytoplasmic side of the membrane. Tyrosine 312 is modified (phosphotyrosine). The helical transmembrane segment at 347–367 (LLGSGIQLFCMILIVIFVAML) threads the bilayer. Residues 368 to 376 (GMLSPSSRG) are Extracellular-facing. Residues 377–397 (ALMTTACFLFMFMGVFGGFSA) form a helical membrane-spanning segment. The Cytoplasmic portion of the chain corresponds to 398–416 (GRLYRTLKGHRWKKGAFCT). A helical transmembrane segment spans residues 417-437 (ATLYPGVVFGICFVLNCFIWG). The Extracellular segment spans residues 438–449 (KHSSGAVPFPTM). Residues 450 to 470 (VALLCMWFGISLPLVYLGYYF) traverse the membrane as a helical segment. At 471-501 (GFRKQPYDNPVRTNQIPRQIPEQRWYMNRFV) the chain is on the cytoplasmic side. A helical membrane pass occupies residues 502–522 (GILMAGILPFGAMFIELFFIF). Topologically, residues 523–535 (SAIWENQFYYLFG) are extracellular. The chain crosses the membrane as a helical span at residues 536–556 (FLFLVFIILVVSCSQISIVMV). Residues 557 to 570 (YFQLCAEDYRWWWR) are Cytoplasmic-facing. Residues 571-591 (NFLVSGGSAFYVLVYAIFYFV) traverse the membrane as a helical segment. The Extracellular segment spans residues 592–598 (NKLDIVE). Residues 599 to 619 (FIPSLLYFGYTALMVLSFWLL) traverse the membrane as a helical segment. Over 620–642 (TGTIGFYAAYMFVRKIYAAVKID) the chain is Cytoplasmic.

It belongs to the nonaspanin (TM9SF) (TC 9.A.2) family. Interacts with ATP6V1H in colon cancer cells. In terms of tissue distribution, highly expressed in metastatic melanoma cells whereas it is undetectable in primary melanoma cells, healthy skin tissues and peripheral blood lymphocytes. Expressed in CD34(+) hematopoietic progenitor cells and during monocyte and granulocyte differentiation. Overexpressed in acute myeloid leukemia, in particular in those displaying granulocytic differentiation (at protein level).

It localises to the membrane. The protein localises to the golgi apparatus. It is found in the early endosome. In terms of biological role, associates with proteins harboring glycine-rich transmembrane domains and ensures their efficient localization to the cell surface. Regulates the assembly and activity of V-ATPase in colon cancer cells via its interaction with V-type proton ATPase subunit H (ATP6V1H) and contributes to V-ATPase-mediated pH alterations in cancer cells which play an important role in drug resistance and invasiveness of colon cancer cells. Plays an important role in an atypical phagocytic activity of metastatic melanoma cells called cannibalism and is involved in the pH regulation of the intracellular vesicles in tumor cells. The protein is Transmembrane 9 superfamily member 4 (TM9SF4) of Homo sapiens (Human).